Consider the following 100-residue polypeptide: uncharacterized protein (100 aa).

Residues 1 to 86 (MRGTRRGPSG…RHRPPEVTEP (86 aa)) are disordered. Pro residues predominate over residues 35–48 (DTPPPRAPPPPPPL).

This is an uncharacterized protein from Human herpesvirus 6A (strain Uganda-1102) (HHV-6 variant A).